Consider the following 66-residue polypeptide: Large ribosomal subunit protein uL29 (66 aa).

This sequence belongs to the universal ribosomal protein uL29 family.

This Borrelia hermsii (strain HS1 / DAH) protein is Large ribosomal subunit protein uL29.